Consider the following 231-residue polypeptide: Lipoprotein-releasing system ATP-binding protein LolD (231 aa).

Positions 11-231 constitute an ABC transporter domain; that stretch reads LQAEHLGKVY…HMENGRLQPD (221 aa). Residue 47–54 coordinates ATP; the sequence is GASGSGKS.

This sequence belongs to the ABC transporter superfamily. Lipoprotein translocase (TC 3.A.1.125) family. The complex is composed of two ATP-binding proteins (LolD) and two transmembrane proteins (LolC and LolE).

It localises to the cell inner membrane. In terms of biological role, part of the ABC transporter complex LolCDE involved in the translocation of mature outer membrane-directed lipoproteins, from the inner membrane to the periplasmic chaperone, LolA. Responsible for the formation of the LolA-lipoprotein complex in an ATP-dependent manner. This is Lipoprotein-releasing system ATP-binding protein LolD from Bordetella bronchiseptica (strain ATCC BAA-588 / NCTC 13252 / RB50) (Alcaligenes bronchisepticus).